The sequence spans 63 residues: uncharacterized protein (63 aa).

Residues 1–15 (MRNPVVWGMIYFAVG) form the signal peptide. The N-palmitoyl cysteine moiety is linked to residue Cys16. Cys16 carries S-diacylglycerol cysteine lipidation. A helical transmembrane segment spans residues 34–56 (SILLMVFAAYNISISFKMFAFSF).

Its subcellular location is the cell membrane. This is an uncharacterized protein from Bacillus subtilis (strain 168).